The primary structure comprises 119 residues: Ubiquinone biosynthesis accessory factor UbiK (119 aa).

The stretch at 79-99 (LLRTREKLALLEQRLSELEAR) forms a coiled coil. Over residues 96–106 (LEARDKPEEVK) the composition is skewed to basic and acidic residues. The interval 96–119 (LEARDKPEEVKPAPAIPPVDPQQE) is disordered. Pro residues predominate over residues 109 to 119 (PAIPPVDPQQE).

This sequence belongs to the UbiK family. Homotrimer.

It is found in the cytoplasm. It functions in the pathway cofactor biosynthesis; ubiquinone biosynthesis. Functionally, required for efficient ubiquinone (coenzyme Q) biosynthesis under aerobic conditions. UbiK is probably an accessory factor of Ubi enzymes and facilitates ubiquinone biosynthesis by acting as an assembly factor, a targeting factor, or both. Dispensable for ubiquinone biosynthesis under anaerobiosis. Required for proliferation in macrophages and virulence in mice. Significantly contributes to colonization and invasion as well as host inflammation and innate immunity after infection. In vitro, has membrane fusogenic activity at acidic pH. In Salmonella typhimurium (strain LT2 / SGSC1412 / ATCC 700720), this protein is Ubiquinone biosynthesis accessory factor UbiK.